Reading from the N-terminus, the 691-residue chain is Proprotein convertase subtilisin/kexin type 9 (691 aa).

Residues 1 to 30 (MGIRCSTWLRWPLSPQLLLLLLLCPTGSRA) form the signal peptide. A propeptide spanning residues 31–151 (QDEDGDYEEL…IEEDSLVFAQ (121 aa)) is cleaved from the precursor. Sulfotyrosine is present on tyrosine 37. Serine 46 carries the post-translational modification Phosphoserine. The 288-residue stretch at 154–441 (PWNLERIIPA…QRVLTPNRVA (288 aa)) folds into the Peptidase S8 domain. Catalysis depends on charge relay system residues aspartate 185 and histidine 225. 2 disulfides stabilise this stretch: cysteine 222/cysteine 254 and cysteine 322/cysteine 357. The active-site Charge relay system is serine 385. The tract at residues 449–691 (ETGGQLLCRT…PSAKASWVHQ (243 aa)) is C-terminal domain. 3 cysteine pairs are disulfide-bonded: cysteine 456-cysteine 526, cysteine 476-cysteine 525, and cysteine 485-cysteine 508. A Cell attachment site motif is present at residues 495–497 (RGD). Residue asparagine 532 is glycosylated (N-linked (GlcNAc...) asparagine). Cystine bridges form between cysteine 533–cysteine 600, cysteine 551–cysteine 599, cysteine 561–cysteine 587, cysteine 607–cysteine 678, cysteine 625–cysteine 677, and cysteine 634–cysteine 653. Serine 687 carries the post-translational modification Phosphoserine.

The protein belongs to the peptidase S8 family. Monomer. Can self-associate to form dimers and higher multimers which may have increased LDLR degrading activity. The precursor protein but not the mature protein may form multimers. Interacts with APOB, VLDLR, LRP8/APOER2 and BACE1. The full-length immature form (pro-PCSK9) interacts with SCNN1A, SCNN1B and SCNN1G. The pro-PCSK9 form (via C-terminal domain) interacts with LDLR. Interacts (via the C-terminal domain) with ANXA2 (via repeat Annexin 1); the interaction inhibits the degradation of LDLR. Ca(2+) serves as cofactor. Cleavage by furin and PCSK5 generates a truncated inactive protein that is unable to induce LDLR degradation. In terms of processing, undergoes autocatalytic cleavage in the endoplasmic reticulum to release the propeptide from the N-terminus and the cleavage of the propeptide is strictly required for its maturation and activation. The cleaved propeptide however remains associated with the catalytic domain through non-covalent interactions, preventing potential substrates from accessing its active site. As a result, it is secreted from cells as a propeptide-containing, enzymatically inactive protein. Post-translationally, phosphorylation protects the propeptide against proteolysis. Highly expressed in 12-day embryo. In the adult, strongly expressed in liver, small intestine, jejunum, and to a lesser extent in kidney, lung, spleen and thymus. Expression in the liver is up-regulated following partial hepatectomy.

It is found in the cytoplasm. The protein resides in the secreted. The protein localises to the endosome. It localises to the lysosome. Its subcellular location is the cell surface. It is found in the endoplasmic reticulum. The protein resides in the golgi apparatus. Its activity is regulated as follows. Its proteolytic activity is autoinhibited by the non-covalent binding of the propeptide to the catalytic domain. Inhibited by EGTA. Its function is as follows. Crucial player in the regulation of plasma cholesterol homeostasis. Binds to low-density lipid receptor family members: low density lipoprotein receptor (LDLR), very low density lipoprotein receptor (VLDLR), apolipoprotein E receptor (LRP1/APOER) and apolipoprotein receptor 2 (LRP8/APOER2), and promotes their degradation in intracellular acidic compartments. Acts via a non-proteolytic mechanism to enhance the degradation of the hepatic LDLR through a clathrin LDLRAP1/ARH-mediated pathway. May prevent the recycling of LDLR from endosomes to the cell surface or direct it to lysosomes for degradation. Can induce ubiquitination of LDLR leading to its subsequent degradation. Inhibits intracellular degradation of APOB via the autophagosome/lysosome pathway in a LDLR-independent manner. Involved in the disposal of non-acetylated intermediates of BACE1 in the early secretory pathway. Inhibits epithelial Na(+) channel (ENaC)-mediated Na(+) absorption by reducing ENaC surface expression primarily by increasing its proteasomal degradation. Regulates neuronal apoptosis via modulation of LRP8/APOER2 levels and related anti-apoptotic signaling pathways. The chain is Proprotein convertase subtilisin/kexin type 9 (Pcsk9) from Rattus norvegicus (Rat).